Reading from the N-terminus, the 374-residue chain is Amino acid binding protein (374 aa).

The signal sequence occupies residues 1 to 27 (MSKKLFRKGILALAVSSVMGLSTHALA).

This sequence belongs to the leucine-binding protein family.

Its subcellular location is the periplasm. In terms of biological role, binds primarily proteinogenic amino acids. This Pseudomonas aeruginosa (strain ATCC 15692 / DSM 22644 / CIP 104116 / JCM 14847 / LMG 12228 / 1C / PRS 101 / PAO1) protein is Amino acid binding protein.